Here is a 464-residue protein sequence, read N- to C-terminus: GDNF family receptor alpha-2 (464 aa).

Positions 1-21 (MILANAFCLFFFLDETLRSLA) are cleaved as a signal peptide. 14 disulfides stabilise this stretch: Cys-40–Cys-93, Cys-47–Cys-53, Cys-63–Cys-78, Cys-95–Cys-105, Cys-161–Cys-222, Cys-168–Cys-174, Cys-185–Cys-200, Cys-195–Cys-241, Cys-224–Cys-229, Cys-251–Cys-323, Cys-258–Cys-264, Cys-275–Cys-293, Cys-285–Cys-347, and Cys-325–Cys-335. Residue Asn-52 is glycosylated (N-linked (GlcNAc...) asparagine). N-linked (GlcNAc...) asparagine glycosylation is present at Asn-357. Positions 363 to 392 (MSPKGPTFSATQAPRVEKTPSLPDDLSDST) are disordered. The segment covering 381–392 (TPSLPDDLSDST) has biased composition (low complexity). N-linked (GlcNAc...) asparagine glycosylation is present at Asn-413. Ser-443 carries GPI-anchor amidated serine lipidation. Positions 444–464 (CRARLSTALTALPLLMVTLAQ) are cleaved as a propeptide — removed in mature form.

It belongs to the GDNFR family. In terms of assembly, interacts with NRTN ligand and RET: forms a 2:2:2 ternary complex composed of NRTN ligand, GFRA2 and RET receptor. Also forms a 4:4:4 tetrameric complex composed of 4 copies of NRTN ligand, GFRA2 and RET receptor, which prevents endocytosis of RET. Interacts with SORL1. In terms of tissue distribution, neurons of the superior cervical and dorsal root ganglia, and adult brain and testis. Low level in the substantia nigra, spleen and adrenal gland. Isoform 1, isoform 2 and isoform 3 are all expressed in brain, liver, ileum, spleen, heart and kidney. In brain, isoform 1 is most abundant, isoform 2 slightly less and isoform 3 is lowest. No significant levels of isoform 1, isoform 2 or isoform 3 expression in testis.

It is found in the cell membrane. Functionally, receptor for neurturin (NRTN), a growth factor that supports the survival of sympathetic neurons. NRTN-binding leads to autophosphorylation and activation of the RET receptor. Also able to mediate GDNF signaling through the RET tyrosine kinase receptor. Participates in NRTN-induced 'Ser-727' phosphorylation of STAT3. The sequence is that of GDNF family receptor alpha-2 from Mus musculus (Mouse).